Reading from the N-terminus, the 439-residue chain is tRNA-2-methylthio-N(6)-dimethylallyladenosine synthase (439 aa).

In terms of domain architecture, MTTase N-terminal spans 2–119 (KYIYIKTWGC…LAQMIDKVEK (118 aa)). 6 residues coordinate [4Fe-4S] cluster: cysteine 11, cysteine 48, cysteine 82, cysteine 156, cysteine 160, and cysteine 163. Residues 142-374 (KKTGYTASIS…QNCINKQTMS (233 aa)) enclose the Radical SAM core domain. The TRAM domain maps to 377 to 439 (RKMLKSTQSV…HTHSLQGELI (63 aa)).

The protein belongs to the methylthiotransferase family. MiaB subfamily. As to quaternary structure, monomer. [4Fe-4S] cluster is required as a cofactor.

It localises to the cytoplasm. It catalyses the reaction N(6)-dimethylallyladenosine(37) in tRNA + (sulfur carrier)-SH + AH2 + 2 S-adenosyl-L-methionine = 2-methylsulfanyl-N(6)-dimethylallyladenosine(37) in tRNA + (sulfur carrier)-H + 5'-deoxyadenosine + L-methionine + A + S-adenosyl-L-homocysteine + 2 H(+). Functionally, catalyzes the methylthiolation of N6-(dimethylallyl)adenosine (i(6)A), leading to the formation of 2-methylthio-N6-(dimethylallyl)adenosine (ms(2)i(6)A) at position 37 in tRNAs that read codons beginning with uridine. The chain is tRNA-2-methylthio-N(6)-dimethylallyladenosine synthase from Buchnera aphidicola subsp. Schizaphis graminum (strain Sg).